A 145-amino-acid polypeptide reads, in one-letter code: Zinc finger C2H2 protein ECU06_1150 (145 aa).

Residues 35–57 (KDCARYGEAQASKHALLAHARRH) form a C2H2-type 1; atypical zinc finger. Residues 63–85 (FECHLCGKDYTRSDPLKKHLLRH) form a C2H2-type 2 zinc finger.

The protein is Zinc finger C2H2 protein ECU06_1150 of Encephalitozoon cuniculi (strain GB-M1) (Microsporidian parasite).